Here is a 196-residue protein sequence, read N- to C-terminus: Orotate phosphoribosyltransferase (196 aa).

117–125 (EDIVTTGLS) serves as a coordination point for 5-phospho-alpha-D-ribose 1-diphosphate. The orotate site is built by threonine 121 and arginine 149.

The protein belongs to the purine/pyrimidine phosphoribosyltransferase family. PyrE subfamily. Homodimer. Mg(2+) is required as a cofactor.

The enzyme catalyses orotidine 5'-phosphate + diphosphate = orotate + 5-phospho-alpha-D-ribose 1-diphosphate. It participates in pyrimidine metabolism; UMP biosynthesis via de novo pathway; UMP from orotate: step 1/2. Its function is as follows. Catalyzes the transfer of a ribosyl phosphate group from 5-phosphoribose 1-diphosphate to orotate, leading to the formation of orotidine monophosphate (OMP). The protein is Orotate phosphoribosyltransferase of Methylorubrum extorquens (strain PA1) (Methylobacterium extorquens).